The sequence spans 65 residues: Putative beta-neurotoxin RjAa2 (65 aa).

Residues 1–64 (KEGYPMGRDG…VWDSSTNKCG (64 aa)) enclose the LCN-type CS-alpha/beta domain. Cystine bridges form between Cys-11-Cys-63, Cys-15-Cys-37, Cys-22-Cys-44, and Cys-26-Cys-46.

This sequence belongs to the long (4 C-C) scorpion toxin superfamily. Sodium channel inhibitor family. Beta subfamily. Expressed by the venom gland.

The protein localises to the secreted. In terms of biological role, beta toxins bind voltage-independently at site-4 of sodium channels (Nav) and shift the voltage of activation toward more negative potentials thereby affecting sodium channel activation and promoting spontaneous and repetitive firing. In Rhopalurus junceus (Caribbean blue scorpion), this protein is Putative beta-neurotoxin RjAa2.